A 30-amino-acid polypeptide reads, in one-letter code: Ampulexin 3 (30 aa).

Residues 1–17 (MKAIMVLFYVMTLTIIG) form the signal peptide.

In terms of assembly, monomer. In terms of tissue distribution, expressed in venom sac and, to a lesser extent, in venom gland. Not expressed in brain.

The protein localises to the secreted. The sequence is that of Ampulexin 3 from Ampulex compressa (Emerald cockroach wasp).